We begin with the raw amino-acid sequence, 265 residues long: Mlc titration factor A (265 aa).

Residues H111, H148, H152, and E211 each coordinate Zn(2+).

This sequence belongs to the MtfA family. Interacts with Mlc. The cofactor is Zn(2+).

The protein resides in the cytoplasm. Its function is as follows. Involved in the modulation of the activity of the glucose-phosphotransferase system (glucose-PTS). Interacts with the transcriptional repressor Mlc, preventing its interaction with DNA and leading to the modulation of expression of genes regulated by Mlc, including ptsG, which encodes the PTS system glucose-specific EIICB component. Shows zinc-dependent metallopeptidase activity. This Salmonella choleraesuis (strain SC-B67) protein is Mlc titration factor A.